The primary structure comprises 327 residues: Ribosomal RNA small subunit methyltransferase H (327 aa).

Residues 36–38 (GGH), Asp61, Phe88, Asp114, and Gln121 contribute to the S-adenosyl-L-methionine site.

Belongs to the methyltransferase superfamily. RsmH family.

It localises to the cytoplasm. The catalysed reaction is cytidine(1402) in 16S rRNA + S-adenosyl-L-methionine = N(4)-methylcytidine(1402) in 16S rRNA + S-adenosyl-L-homocysteine + H(+). Specifically methylates the N4 position of cytidine in position 1402 (C1402) of 16S rRNA. The polypeptide is Ribosomal RNA small subunit methyltransferase H (Chlorobium luteolum (strain DSM 273 / BCRC 81028 / 2530) (Pelodictyon luteolum)).